Consider the following 91-residue polypeptide: Mercuric transport protein periplasmic component (91 aa).

Positions 1 to 19 (MKKLFASLALAAAVAPVWA) are cleaved as a signal peptide. One can recognise an HMA domain in the interval 22-88 (QTVTLAVPGM…ATADAGYPSS (67 aa)). Residues Cys33 and Cys36 each contribute to the Hg(2+) site.

It belongs to the MerP family. Monomer.

Its subcellular location is the periplasm. Involved in mercury resistance. Acts as a mercury scavenger that specifically binds to a mercuric ion in the periplasm and probably passes it to the cytoplasmic mercuric reductase MerA via the mercuric transport protein MerT. This is Mercuric transport protein periplasmic component from Shigella flexneri.